Reading from the N-terminus, the 1072-residue chain is Integrator complex subunit 3 homolog (1072 aa).

Disordered stretches follow at residues 920 to 943 (YPSS…STPS) and 1002 to 1072 (DTTV…NDSD). Phosphoserine is present on residues Ser1042, Ser1043, Ser1047, and Ser1048.

The protein belongs to the Integrator subunit 3 family. As to quaternary structure, belongs to the multiprotein complex Integrator, at least composed of IntS1, IntS2, IntS3, IntS4, omd/IntS5, IntS6, defl/IntS7, IntS8, IntS9, IntS10, IntS11, IntS12, asun/IntS13, IntS14 and IntS15. The core complex associates with protein phosphatase 2A subunits mts/PP2A and Pp2A-29B, to form the Integrator-PP2A (INTAC) complex.

The protein localises to the nucleus. It is found in the cytoplasm. Its function is as follows. Component of the integrator complex, a multiprotein complex that terminates RNA polymerase II (Pol II) transcription in the promoter-proximal region of genes. The integrator complex provides a quality checkpoint during transcription elongation by driving premature transcription termination of transcripts that are unfavorably configured for transcriptional elongation: the complex terminates transcription by (1) catalyzing dephosphorylation of the C-terminal domain (CTD) of Pol II subunit Polr2A/Rbp1 and Spt5, and (2) degrading the exiting nascent RNA transcript via endonuclease activity. The integrator complex is also involved in the 3'-end processing of the U7 snRNA, and also the spliceosomal snRNAs U1, U2, U4 and U5. The polypeptide is Integrator complex subunit 3 homolog (IntS3) (Drosophila yakuba (Fruit fly)).